The following is a 404-amino-acid chain: p-hydroxybenzoate hydroxylase (404 aa).

FAD contacts are provided by residues Glu35, 45 to 50, and Gln105; that span reads RIRAGI. Substrate-binding positions include Tyr203, 214 to 216, and Tyr224; that span reads SMR. An FAD-binding site is contributed by Asp288. Pro295 contacts substrate. An FAD-binding site is contributed by 301 to 302; it reads LN.

It belongs to the aromatic-ring hydroxylase family. Homodimer. It depends on FAD as a cofactor.

It catalyses the reaction 4-hydroxybenzoate + NADPH + O2 + H(+) = 3,4-dihydroxybenzoate + NADP(+) + H2O. It functions in the pathway aromatic compound metabolism; benzoate degradation via hydroxylation; 3,4-dihydroxybenzoate from benzoate: step 2/2. Functionally, catalyzes the incorporation of an atom of dioxygen into p-hydroxybenzoate (p-OHB) to form 3,4-dihydroxybenzoate (3,4DOHB). The reaction occurs in two parts: reduction of the flavin adenine dinucleotide (FAD) in the enzyme by reduced nicotinamide adenine dinucleotide phosphate (NADPH) in response to binding p-hydroxybenzoate to the enzyme and oxidation of reduced FAD with oxygen to form a hydroperoxide, which then oxygenates p-hydroxybenzoate. The sequence is that of p-hydroxybenzoate hydroxylase (pobA) from Acinetobacter baylyi (strain ATCC 33305 / BD413 / ADP1).